We begin with the raw amino-acid sequence, 690 residues long: Copper-exporting P-type ATPase B (690 aa).

Over M1–V64 the chain is Cytoplasmic. The interval Q23–D46 is disordered. Residues H28–D46 are compositionally biased toward basic and acidic residues. A helical transmembrane segment spans residues S65–F85. Topologically, residues R86–G91 are extracellular. A helical membrane pass occupies residues S92 to L112. The Cytoplasmic segment spans residues K113–M127. A helical transmembrane segment spans residues T128–L148. Residues K149–K151 are Extracellular-facing. A helical transmembrane segment spans residues F152 to M172. Residues R173–R303 lie on the Cytoplasmic side of the membrane. A helical membrane pass occupies residues A304–L324. The Extracellular segment spans residues A325–R336. Residues A337 to V357 traverse the membrane as a helical segment. The Cytoplasmic segment spans residues A358–N640. The 4-aspartylphosphate intermediate role is filled by D389. Residues K390–T391, T537–G538, and K565 contribute to the phosphate site. 2 residues coordinate Mg(2+): D583 and D587. A helical membrane pass occupies residues L641 to S661. At A662–G663 the chain is on the extracellular side. A helical transmembrane segment spans residues I664–I684. Residues N685 to R690 lie on the Cytoplasmic side of the membrane.

It belongs to the cation transport ATPase (P-type) (TC 3.A.3) family. Type IB subfamily.

The protein resides in the cell membrane. It catalyses the reaction Cu(2+)(in) + ATP + H2O = Cu(2+)(out) + ADP + phosphate + H(+). With respect to regulation, activated by Cu(2+) and to a lesser extent by Ag(+) and Cu(+). Functionally, involved in copper export. In Archaeoglobus fulgidus (strain ATCC 49558 / DSM 4304 / JCM 9628 / NBRC 100126 / VC-16), this protein is Copper-exporting P-type ATPase B (copB).